Consider the following 292-residue polypeptide: 11-beta-hydroxysteroid dehydrogenase 1 (292 aa).

Residues 2–7 lie on the Cytoplasmic side of the membrane; it reads HFMKKY. The helical; Signal-anchor for type II membrane protein transmembrane segment at 8-24 threads the bilayer; that stretch reads LLPILVLFLAYYYYSTK. Residues 25–292 lie on the Lumenal side of the membrane; that stretch reads EEFRPEMLQG…SFTFDKLISS (268 aa). Residues 41–67, 92–93, and 119–121 each bind NADP(+); these read GASK…TARS, TM, and NHI. N-linked (GlcNAc...) asparagine glycosylation occurs at Asn162. Ser170 is a binding site for substrate. The active-site Proton acceptor is the Tyr183. Position 183–187 (183–187) interacts with NADP(+); sequence YSASK. N-linked (GlcNAc...) asparagine glycosylation occurs at Asn207. NADP(+) is bound at residue 218-222; that stretch reads INTET.

This sequence belongs to the short-chain dehydrogenases/reductases (SDR) family. As to quaternary structure, homodimer. Detected in adrenal gland, liver, kidney, testis, and at lower levels in brain and lung (at protein level).

The protein localises to the endoplasmic reticulum membrane. The enzyme catalyses an 11beta-hydroxysteroid + NADP(+) = an 11-oxosteroid + NADPH + H(+). The catalysed reaction is corticosterone + NADP(+) = 11-dehydrocorticosterone + NADPH + H(+). It catalyses the reaction a 7beta-hydroxysteroid + NADP(+) = a 7-oxosteroid + NADPH + H(+). It carries out the reaction 7-oxocholesterol + NADPH + H(+) = 7beta-hydroxycholesterol + NADP(+). The enzyme catalyses 7-oxocholesterol + NADPH + H(+) = 7alpha-hydroxycholesterol + NADP(+). The catalysed reaction is chenodeoxycholate + NADP(+) = 7-oxolithocholate + NADPH + H(+). It catalyses the reaction 7-oxolithocholate + NADPH + H(+) = ursodeoxycholate + NADP(+). It carries out the reaction glycochenodeoxycholate + NADP(+) = 7-oxoglycolithocholate + NADPH + H(+). The enzyme catalyses taurochenodeoxycholate + NADP(+) = 7-oxotaurolithocholate + NADPH + H(+). The catalysed reaction is tauroursodeoxycholate + NADP(+) = 7-oxotaurolithocholate + NADPH + H(+). It catalyses the reaction glycoursodeoxycholate + NADP(+) = 7-oxoglycolithocholate + NADPH + H(+). It carries out the reaction 7-oxopregnenolone + NADPH + H(+) = 7beta-hydroxypregnenolone + NADP(+). The enzyme catalyses 3beta,7alpha-dihydroxyandrost-5-en-17-one + NADP(+) = 3beta-hydroxy-5-androstene-7,17-dione + NADPH + H(+). The catalysed reaction is 3beta-hydroxy-5-androstene-7,17-dione + NADPH + H(+) = 3beta,7beta-dihydroxyandrost-5-en-17-one + NADP(+). It catalyses the reaction 3beta-hydroxy-5alpha-androstane-7,17-dione + NADPH + H(+) = 3beta,7beta-dihydroxy-5alpha-androstan-17-one + NADP(+). The protein operates within steroid metabolism. Functionally, controls the reversible conversion of biologically active glucocorticoids such as 11-dehydrocorticosterone to corticosterone in the presence of NADP(H). Participates in the corticosteroid receptor-mediated anti-inflammatory response, as well as metabolic and homeostatic processes. Bidirectional in vitro, predominantly functions as a reductase in vivo, thereby increasing the concentration of active glucocorticoids. It has broad substrate specificity, besides glucocorticoids, it accepts other steroid and sterol substrates. Interconverts 7-oxo- and 7-hydroxy-neurosteroids such as 7-oxopregnenolone and 7beta-hydroxypregnenolone, 7-oxodehydroepiandrosterone (3beta-hydroxy-5-androstene-7,17-dione) and 7beta-hydroxydehydroepiandrosterone (3beta,7beta-dihydroxyandrost-5-en-17-one), among others. Catalyzes reversibly the conversion of the major dietary oxysterol, 7-ketocholesterol (7-oxocholesterol), into the more polar 7-beta-hydroxycholesterol and 7-alpha-hhydroxycholesterol metabolites. 7-oxocholesterol is one of the most important oxysterols, it participates in several events such as induction of apoptosis, accumulation in atherosclerotic lesions, lipid peroxidation, and induction of foam cell formation. Mediates the 7-oxo reduction of 7-oxolithocholate mainly to chenodeoxycholate, and to a lesser extent to ursodeoxycholate, both in its free form and when conjugated to glycine or taurine, providing a link between glucocorticoid activation and bile acid metabolism. Catalyzes the synthesis of 7-beta-25-dihydroxycholesterol from 7-oxo-25-hydroxycholesterol in vitro, which acts as a ligand for the G-protein-coupled receptor (GPCR) Epstein-Barr virus-induced gene 2 (EBI2) and may thereby regulate immune cell migration. The sequence is that of 11-beta-hydroxysteroid dehydrogenase 1 (HSD11B1) from Mesocricetus auratus (Golden hamster).